The following is a 564-amino-acid chain: Beta-hexosaminidase subunit B2 (564 aa).

An N-terminal signal peptide occupies residues 1 to 19 (MKLKFIFLILFFIIGNSIG). N-linked (GlcNAc...) asparagine glycans are attached at residues asparagine 43, asparagine 84, asparagine 303, and asparagine 347. Catalysis depends on glutamate 357, which acts as the Proton donor. 5 N-linked (GlcNAc...) asparagine glycosylation sites follow: asparagine 364, asparagine 377, asparagine 439, asparagine 524, and asparagine 551.

The protein belongs to the glycosyl hydrolase 20 family.

It localises to the lysosome. The enzyme catalyses Hydrolysis of terminal non-reducing N-acetyl-D-hexosamine residues in N-acetyl-beta-D-hexosaminides.. Functionally, responsible for the degradation of GM2 gangliosides, and a variety of other molecules containing terminal N-acetyl hexosamines. The polypeptide is Beta-hexosaminidase subunit B2 (hexb2) (Dictyostelium discoideum (Social amoeba)).